Here is a 157-residue protein sequence, read N- to C-terminus: Beta-defensin 125 (157 aa).

The first 20 residues, 1–20 (MNLLMLTFIICGLLTQVTKG), serve as a signal peptide directing secretion. Disulfide bonds link Cys27-Cys55, Cys35-Cys49, and Cys39-Cys56. The tract at residues 109 to 157 (GETITPETNTPETTMPPSETTSSKTTMPPSETATSETMPPPSQTALTHN) is disordered. Residues 110–140 (ETITPETNTPETTMPPSETTSSKTTMPPSET) show a composition bias toward low complexity. The segment covering 141-157 (ATSETMPPPSQTALTHN) has biased composition (polar residues).

The protein belongs to the beta-defensin family.

Its subcellular location is the secreted. Has antibacterial activity. The sequence is that of Beta-defensin 125 (DEFB125) from Pongo pygmaeus (Bornean orangutan).